We begin with the raw amino-acid sequence, 179 residues long: Acireductone dioxygenase (179 aa).

The Fe(2+) site is built by H99, H101, E105, and H143. 4 residues coordinate Ni(2+): H99, H101, E105, and H143.

This sequence belongs to the acireductone dioxygenase (ARD) family. Monomer. Requires Fe(2+) as cofactor. Ni(2+) serves as cofactor.

It catalyses the reaction 1,2-dihydroxy-5-(methylsulfanyl)pent-1-en-3-one + O2 = 3-(methylsulfanyl)propanoate + CO + formate + 2 H(+). The catalysed reaction is 1,2-dihydroxy-5-(methylsulfanyl)pent-1-en-3-one + O2 = 4-methylsulfanyl-2-oxobutanoate + formate + 2 H(+). Its pathway is amino-acid biosynthesis; L-methionine biosynthesis via salvage pathway; L-methionine from S-methyl-5-thio-alpha-D-ribose 1-phosphate: step 5/6. Functionally, catalyzes 2 different reactions between oxygen and the acireductone 1,2-dihydroxy-3-keto-5-methylthiopentene (DHK-MTPene) depending upon the metal bound in the active site. Fe-containing acireductone dioxygenase (Fe-ARD) produces formate and 2-keto-4-methylthiobutyrate (KMTB), the alpha-ketoacid precursor of methionine in the methionine recycle pathway. Ni-containing acireductone dioxygenase (Ni-ARD) produces methylthiopropionate, carbon monoxide and formate, and does not lie on the methionine recycle pathway. This is Acireductone dioxygenase from Sulfurihydrogenibium sp. (strain YO3AOP1).